A 440-amino-acid polypeptide reads, in one-letter code: Diels-Alderase mycB (440 aa).

The signal sequence occupies residues 1–18 (MGYLVKLACGLLLPLATA). 3 N-linked (GlcNAc...) asparagine glycosylation sites follow: Asn-80, Asn-155, and Asn-332.

The protein belongs to the Diels-Alderase family.

The enzyme catalyses (5S)-5-(2-methylpropyl)-3-[(2E,6R,8E,10E,12E)-6,8,10,12-tetramethyltetradeca-2,8,10,12-tetraenoyl]-2,5-dihydro-1H-pyrrol-2-one = (5S)-3-[(1S,2R,4aR,6R,8aS)-2-(but-2-en-2-yl)-3,4a,6-trimethyl-1,2,4a,5,6,7,8,8a-octahydronaphthalene-1-carbonyl]-5-(2-methylpropyl)-2,5-dihydro-1H-pyrrol-2-one. The catalysed reaction is (5Z)-5-(2-methylpropylidene)-3-[(2E,6R,8E,10E,12E)-6,8,10,12-tetramethyltetradeca-2,8,10,12-tetraenoyl]-2,5-dihydro-1H-pyrrol-2-one = myceliothermophin E. The protein operates within mycotoxin biosynthesis. Diels-Alderase; part of the gene cluster that mediates the biosynthesis of myceliothermophins, mycotoxins that contain a trans-fused decalin ring system connected to a conjugated 3-pyrrolin-2-one moiety and that have potential anti-tumor properties. The polyketide synthase module (PKS) of the PKS-NRPS mycA is responsible for the synthesis of the octaketide backbone. The downstream nonribosomal peptide synthetase (NRPS) module then amidates the carboxyl end of the octaketide with a leucine. A reductase-like domain (R) at the C-terminus catalyzes the reductive release of the polyketide-amino acid intermediate. Because mycA lacks a designated enoylreductase (ER) domain, the required activity is provided the enoyl reductase mycC. Following mycA-catalyzed construction and release of aminoacyl polyketide aldehyde, Knoevenagel condensation yields the expected ketone. This C18 keto acyclic precursor is the substrate of the Diels-Alderase mycB, that catalyzes the Diels-Alder cycloaddition to produce myceliothermophin E. A yet unknown oxygenase involved in the production of myceliothermophin A, via substitution with a hydroxyl group at the C21, has still to be identified. This is Diels-Alderase mycB from Thermothelomyces thermophilus (strain ATCC 42464 / BCRC 31852 / DSM 1799) (Sporotrichum thermophile).